The primary structure comprises 337 residues: Glyceraldehyde-3-phosphate dehydrogenase, cytosolic (337 aa).

NAD(+)-binding positions include 13 to 14 (RI), D35, and R82. Residues 153-155 (SCT), T184, 213-214 (TG), and R236 contribute to the D-glyceraldehyde 3-phosphate site. C154 (nucleophile) is an active-site residue. N318 serves as a coordination point for NAD(+).

It belongs to the glyceraldehyde-3-phosphate dehydrogenase family. In terms of assembly, homotetramer.

The protein resides in the cytoplasm. The catalysed reaction is D-glyceraldehyde 3-phosphate + phosphate + NAD(+) = (2R)-3-phospho-glyceroyl phosphate + NADH + H(+). Its pathway is carbohydrate degradation; glycolysis; pyruvate from D-glyceraldehyde 3-phosphate: step 1/5. Key enzyme in glycolysis that catalyzes the first step of the pathway by converting D-glyceraldehyde 3-phosphate (G3P) into 3-phospho-D-glyceroyl phosphate. Essential for the maintenance of cellular ATP levels and carbohydrate metabolism. The sequence is that of Glyceraldehyde-3-phosphate dehydrogenase, cytosolic (GAPC) from Craterostigma plantagineum (Blue gem).